The chain runs to 344 residues: MSMTPQKALQCIIEHREILQDEMVQLMRQIMNAEVSGIMVAAILAGLRVKKETVGEIAGAATVMREFSRKVNVQDRTHLVDIVGTGGDGWHTFNISTCAMFVAAAAGAKVAKHGNRSVSSKSGSADVLEALGASIELQPLEVAEVIGCIGVGFMFAPIHHPVMQVVSPVRREMGVRTIFNILGPLTNPADAPNILMGVFDPDLVGIQAHVLHKLGAERALVVCGRDGMDELSLGTTTLVGELRGGRVREYEVSPEDYGMAVSPISNLQVESPAESREMLLDVLAGQPGPALDVVALNAGAALYVAGVAQDIGHGVALAREVLFDGRARDILDRYVAFTRRPRYV.

5-phospho-alpha-D-ribose 1-diphosphate contacts are provided by residues Gly-84, 87–88 (GD), Thr-92, 94–97 (NIST), 112–120 (KHGNRSVSS), and Ser-124. Anthranilate is bound at residue Gly-84. Ser-96 serves as a coordination point for Mg(2+). Asn-115 lines the anthranilate pocket. Arg-170 lines the anthranilate pocket. Asp-229 and Glu-230 together coordinate Mg(2+).

This sequence belongs to the anthranilate phosphoribosyltransferase family. Homodimer. The cofactor is Mg(2+).

It carries out the reaction N-(5-phospho-beta-D-ribosyl)anthranilate + diphosphate = 5-phospho-alpha-D-ribose 1-diphosphate + anthranilate. It participates in amino-acid biosynthesis; L-tryptophan biosynthesis; L-tryptophan from chorismate: step 2/5. In terms of biological role, catalyzes the transfer of the phosphoribosyl group of 5-phosphorylribose-1-pyrophosphate (PRPP) to anthranilate to yield N-(5'-phosphoribosyl)-anthranilate (PRA). This chain is Anthranilate phosphoribosyltransferase, found in Xylella fastidiosa (strain 9a5c).